We begin with the raw amino-acid sequence, 247 residues long: GTP cyclohydrolase 1 type 2 homolog (247 aa).

Residues histidine 63, histidine 64, aspartate 101, histidine 215, and glutamate 219 each contribute to the a divalent metal cation site.

Belongs to the GTP cyclohydrolase I type 2/NIF3 family. In terms of assembly, toroid-shaped homohexamer. In the hexamer, 3 dimers assemble to form a ring-like structure surrounding a central hole.

Functionally, provides significant protection from radiation damage and may be involved in the degradation of radiation-damaged nucleotides. The chain is GTP cyclohydrolase 1 type 2 homolog (ybgI) from Salmonella typhi.